The sequence spans 120 residues: NAD(P)H-quinone oxidoreductase subunit 3, chloroplastic (120 aa).

3 helical membrane-spanning segments follow: residues 10 to 30 (LWFF…ISEI), 64 to 84 (MFAL…PWAI), and 89 to 109 (LGIS…VGLV).

The protein belongs to the complex I subunit 3 family. As to quaternary structure, NDH is composed of at least 16 different subunits, 5 of which are encoded in the nucleus.

Its subcellular location is the plastid. The protein resides in the chloroplast thylakoid membrane. The catalysed reaction is a plastoquinone + NADH + (n+1) H(+)(in) = a plastoquinol + NAD(+) + n H(+)(out). The enzyme catalyses a plastoquinone + NADPH + (n+1) H(+)(in) = a plastoquinol + NADP(+) + n H(+)(out). In terms of biological role, NDH shuttles electrons from NAD(P)H:plastoquinone, via FMN and iron-sulfur (Fe-S) centers, to quinones in the photosynthetic chain and possibly in a chloroplast respiratory chain. The immediate electron acceptor for the enzyme in this species is believed to be plastoquinone. Couples the redox reaction to proton translocation, and thus conserves the redox energy in a proton gradient. The protein is NAD(P)H-quinone oxidoreductase subunit 3, chloroplastic of Chara vulgaris (Common stonewort).